The sequence spans 222 residues: Peptidyl-prolyl cis-trans isomerase FKBP7 (222 aa).

An N-terminal signal peptide occupies residues 1 to 23 (MPKTMHFLFRFIVFFYLWGLFTA). Asparagine 45 carries N-linked (GlcNAc...) asparagine glycosylation. Positions 53–145 (GDLLNAHYDG…IFEIELYAVT (93 aa)) constitute a PPIase FKBP-type domain. EF-hand domains lie at 145–180 (TKGP…EFEK) and 189–222 (YQDA…HDEL). Ca(2+) is bound by residues aspartate 158, aspartate 160, aspartate 162, glutamine 164, glutamate 169, aspartate 202, aspartate 204, aspartate 206, and glutamate 213. The Prevents secretion from ER motif lies at 219–222 (HDEL).

In terms of processing, glycosylated.

The protein resides in the endoplasmic reticulum lumen. It catalyses the reaction [protein]-peptidylproline (omega=180) = [protein]-peptidylproline (omega=0). In terms of biological role, PPIases accelerate the folding of proteins during protein synthesis. This Pongo abelii (Sumatran orangutan) protein is Peptidyl-prolyl cis-trans isomerase FKBP7 (FKBP7).